Consider the following 509-residue polypeptide: Methylmalonyl-CoA decarboxylase subunit alpha (509 aa).

The 257-residue stretch at 4-260 (VQEKIELLHE…NNMEDAPLVD (257 aa)) folds into the CoA carboxyltransferase N-terminal domain. One can recognise a CoA carboxyltransferase C-terminal domain in the interval 267–503 (REDESLNSLL…SKRENRAPKK (237 aa)).

This sequence belongs to the AccD/PCCB family. The methylmalonyl-CoA decarboxylase is composed of five subunits: the carboxyltransferase alpha subunit (MmdA), the tunnel beta subunit (MmdB), the biotin-containing gamma subunit (MmdC), and the delta (MmdD) and epsilon (MmdE) subunits. Interacts with the gamma subunit.

Its subcellular location is the cell membrane. It catalyses the reaction (S)-methylmalonyl-CoA + Na(+)(in) + H(+)(out) = propanoyl-CoA + Na(+)(out) + CO2. Its activity is regulated as follows. Completely inhibited by avidin. Carboxyltransferase subunit of the sodium ion pump methylmalonyl-CoA decarboxylase, which converts the chemical energy of a decarboxylation reaction into an electrochemical gradient of Na(+) ions across the cytoplasmic membrane, thereby creating a sodium ion motive force that is used for ATP synthesis. The alpha subunit catalyzes the Na(+)-independent carboxyltransfer from methylmalonyl-CoA to the prosthetic biotin group located on the gamma subunit. Can also convert malonyl-CoA into acetyl-CoA. This Veillonella parvula (Staphylococcus parvulus) protein is Methylmalonyl-CoA decarboxylase subunit alpha.